A 311-amino-acid polypeptide reads, in one-letter code: Probable deoxyhypusine synthase (311 aa).

The active-site Nucleophile is Lys284.

This sequence belongs to the deoxyhypusine synthase family. NAD(+) is required as a cofactor.

The enzyme catalyses [eIF5A protein]-L-lysine + spermidine = [eIF5A protein]-deoxyhypusine + propane-1,3-diamine. It participates in protein modification; eIF5A hypusination. Catalyzes the NAD-dependent oxidative cleavage of spermidine and the subsequent transfer of the butylamine moiety of spermidine to the epsilon-amino group of a specific lysine residue of the eIF-5A precursor protein to form the intermediate deoxyhypusine residue. The sequence is that of Probable deoxyhypusine synthase from Sulfolobus acidocaldarius (strain ATCC 33909 / DSM 639 / JCM 8929 / NBRC 15157 / NCIMB 11770).